The chain runs to 313 residues: Protein-methionine-sulfoxide reductase catalytic subunit MsrP (313 aa).

The tat-type signal signal peptide spans Met-1–Ala-46. Mo-molybdopterin contacts are provided by residues Asn-70, Tyr-73–Glu-74, Cys-127, Thr-162, Asn-212, Arg-217, and Gly-228–Lys-230.

It belongs to the MsrP family. In terms of assembly, heterodimer of a catalytic subunit (MsrP) and a heme-binding subunit (MsrQ). Mo-molybdopterin serves as cofactor. Predicted to be exported by the Tat system. The position of the signal peptide cleavage has not been experimentally proven.

It is found in the periplasm. It carries out the reaction L-methionyl-[protein] + a quinone + H2O = L-methionyl-(S)-S-oxide-[protein] + a quinol. It catalyses the reaction L-methionyl-[protein] + a quinone + H2O = L-methionyl-(R)-S-oxide-[protein] + a quinol. In terms of biological role, part of the MsrPQ system that repairs oxidized periplasmic proteins containing methionine sulfoxide residues (Met-O), using respiratory chain electrons. Thus protects these proteins from oxidative-stress damage caused by reactive species of oxygen and chlorine generated by the host defense mechanisms. MsrPQ is essential for the maintenance of envelope integrity under bleach stress, rescuing a wide series of structurally unrelated periplasmic proteins from methionine oxidation. The catalytic subunit MsrP is non-stereospecific, being able to reduce both (R-) and (S-) diastereoisomers of methionine sulfoxide. In Rhizobium meliloti (strain 1021) (Ensifer meliloti), this protein is Protein-methionine-sulfoxide reductase catalytic subunit MsrP.